We begin with the raw amino-acid sequence, 111 residues long: uncharacterized protein (111 aa).

It is found in the mitochondrion. This is an uncharacterized protein from Arabidopsis thaliana (Mouse-ear cress).